Here is a 478-residue protein sequence, read N- to C-terminus: Isoeugenol monooxygenase (478 aa).

Fe cation contacts are provided by H167, H218, H282, and H471.

It belongs to the carotenoid oxygenase family. As to quaternary structure, monomer. It depends on Fe(2+) as a cofactor.

The catalysed reaction is (E)-isoeugenol + O2 = vanillin + acetaldehyde. Inhibited by HgCl(2), AgNO(3), CuCl(2), phenylhydrazine, 8-hydroxyquinoline, R-cycloserine and p-chloromercuribenzoic acid. Its function is as follows. Involved in isoeugenol degradation. Catalyzes the oxidative cleavage of the side chain double-bond of isoeugenol to form vanillin and acetaldehyde. In Pseudomonas putida (Arthrobacter siderocapsulatus), this protein is Isoeugenol monooxygenase.